We begin with the raw amino-acid sequence, 194 residues long: BCL2/adenovirus E1B 19 kDa protein-interacting protein 3 (194 aa).

Residues 1–102 (MSQNGAPGMQ…SQSEEDDIER (102 aa)) are disordered. The segment covering 42-55 (DMEKILLDAQHESG) has biased composition (basic and acidic residues). Phosphoserine is present on residues S54, S66, S86, S92, and S95. A compositionally biased stretch (low complexity) spans 56–69 (RSSSKSSHCDSPPR). The span at 78 to 88 (RASETDTHSIG) shows a compositional bias: basic and acidic residues. Residues 100-125 (IERRKEVESILKKNSDWIWDWSSRPE) carry the BH3 motif. The helical transmembrane segment at 164-184 (VFLPSLLLSHLLAIGLGIYIG) threads the bilayer.

It belongs to the NIP3 family. Homodimer. Binds to BCL2. Interacts with BNIP3L and ACAA2. Interacts (via BH3 domain) with SPATA18 (via coiled-coil domains). Interacts with BOK; promotes BOK oligomerization. Interacts with PPTC7; this interaction promotes BNIP3 degradation. In terms of assembly, (Microbial infection) Interacts with adenovirus E1B 19 kDa protein. As to quaternary structure, (Microbial infection) Interacts with Epstein-Barr virus BHRF1.

It localises to the mitochondrion. It is found in the mitochondrion outer membrane. Its function is as follows. Apoptosis-inducing protein that can overcome BCL2 suppression. May play a role in repartitioning calcium between the two major intracellular calcium stores in association with BCL2. Involved in mitochondrial quality control via its interaction with SPATA18/MIEAP: in response to mitochondrial damage, participates in mitochondrial protein catabolic process (also named MALM) leading to the degradation of damaged proteins inside mitochondria. The physical interaction of SPATA18/MIEAP, BNIP3 and BNIP3L/NIX at the mitochondrial outer membrane regulates the opening of a pore in the mitochondrial double membrane in order to mediate the translocation of lysosomal proteins from the cytoplasm to the mitochondrial matrix. Plays an important role in the calprotectin (S100A8/A9)-induced cell death pathway. This is BCL2/adenovirus E1B 19 kDa protein-interacting protein 3 from Homo sapiens (Human).